We begin with the raw amino-acid sequence, 745 residues long: Kinesin-like protein KIN-14M (745 aa).

A disordered region spans residues 1–31; it reads MVGEMTNNGRIRPSFPVKDLTSNEGSEYGGP. The tract at residues 1 to 35 is globular; it reads MVGEMTNNGRIRPSFPVKDLTSNEGSEYGGPVEFT. Microtubule-binding regions lie at residues 65-77 and 198-745; these read YVKR…RWFQ and SLQL…LSLG. 2 coiled-coil regions span residues 76–223 and 259–389; these read FQEL…GEKE and KDEL…GNIR. Positions 387–724 constitute a Kinesin motor domain; the sequence is NIRVFCRVRP…LRFAARVNAC (338 aa). 472–479 provides a ligand contact to ATP; the sequence is GQTGSGKT.

This sequence belongs to the TRAFAC class myosin-kinesin ATPase superfamily. Kinesin family. KIN-14 subfamily. Bind to microtubules in an ATP-insensitive manner (in vitro). Homodimer and heterodimer with KIN14N/KATC (in vitro).

It is found in the cytoplasm. It localises to the cytoskeleton. This is Kinesin-like protein KIN-14M from Arabidopsis thaliana (Mouse-ear cress).